The following is a 197-amino-acid chain: Transposon Tn552 resolvase (197 aa).

The Resolvase/invertase-type recombinase catalytic domain maps to 1 to 136 (MKIGYARVST…AGRIAARARG (136 aa)). The active-site O-(5'-phospho-DNA)-serine intermediate is Ser9. Positions 163–182 (IKTIAEQWQVSRTTIYRYLN) form a DNA-binding region, H-T-H motif.

The protein belongs to the site-specific recombinase resolvase family.

Functionally, resolvase catalyzes the resolution (a site-specific recombination) of the cointegrated replicon to yield the final transposition products. This chain is Transposon Tn552 resolvase (tnpR), found in Staphylococcus aureus.